The following is a 212-amino-acid chain: Transcriptional regulator GfcR (212 aa).

Residues 38–60 (LVERSGTGTEPDTSDDGGPHDIH) are disordered.

This sequence belongs to the purine/pyrimidine phosphoribosyltransferase family. GfcR subfamily.

Functionally, DNA-binding transcriptional regulator that functions as a regulator of central sugar catabolic pathways. The chain is Transcriptional regulator GfcR from Haloarcula marismortui (strain ATCC 43049 / DSM 3752 / JCM 8966 / VKM B-1809) (Halobacterium marismortui).